We begin with the raw amino-acid sequence, 407 residues long: Peptidase T (407 aa).

His81 is a Zn(2+) binding site. Residue Asp83 is part of the active site. Position 142 (Asp142) interacts with Zn(2+). The active-site Proton acceptor is Glu176. Positions 177, 199, and 381 each coordinate Zn(2+).

Belongs to the peptidase M20B family. Zn(2+) serves as cofactor.

The protein resides in the cytoplasm. It catalyses the reaction Release of the N-terminal residue from a tripeptide.. Functionally, cleaves the N-terminal amino acid of tripeptides. In Streptococcus pneumoniae (strain JJA), this protein is Peptidase T.